The sequence spans 155 residues: Endoribonuclease YbeY (155 aa).

Zn(2+) is bound by residues H114, H118, and H124.

Belongs to the endoribonuclease YbeY family. The cofactor is Zn(2+).

Its subcellular location is the cytoplasm. Its function is as follows. Single strand-specific metallo-endoribonuclease involved in late-stage 70S ribosome quality control and in maturation of the 3' terminus of the 16S rRNA. This is Endoribonuclease YbeY from Buchnera aphidicola subsp. Acyrthosiphon pisum (strain APS) (Acyrthosiphon pisum symbiotic bacterium).